The primary structure comprises 32 residues: Acyclotide phyb-M (32 aa).

Gln1 is subject to Pyrrolidone carboxylic acid. 3 cysteine pairs are disulfide-bonded: Cys5/Cys21, Cys9/Cys23, and Cys14/Cys28.

Post-translationally, contains 3 disulfide bonds. In terms of tissue distribution, expressed in midvein, lamina and periphery of leaves (at protein level).

Its function is as follows. Probably participates in a plant defense mechanism. The sequence is that of Acyclotide phyb-M from Petunia hybrida (Petunia).